Reading from the N-terminus, the 439-residue chain is Chromosomal replication initiator protein DnaA (439 aa).

Residues 1-72 (MEQFSAFKLL…SKLYDDIRAV (72 aa)) are domain I, interacts with DnaA modulators. The interval 72–99 (VRFVNEQDFFINLAKLEEDNRETLYQSS) is domain II. A domain III, AAA+ region region spans residues 100–322 (GLSKNFTFKN…GIATKLLFYV (223 aa)). G144, G146, K147, and T148 together coordinate ATP. The interval 323–439 (KTTKQNLINN…LQDIITSLVI (117 aa)) is domain IV, binds dsDNA.

This sequence belongs to the DnaA family. Oligomerizes as a right-handed, spiral filament on DNA at oriC.

Its subcellular location is the cytoplasm. In terms of biological role, plays an essential role in the initiation and regulation of chromosomal replication. ATP-DnaA binds to the origin of replication (oriC) to initiate formation of the DNA replication initiation complex once per cell cycle. Binds the DnaA box (a 9 base pair repeat at the origin) and separates the double-stranded (ds)DNA. Forms a right-handed helical filament on oriC DNA; dsDNA binds to the exterior of the filament while single-stranded (ss)DNA is stabiized in the filament's interior. The ATP-DnaA-oriC complex binds and stabilizes one strand of the AT-rich DNA unwinding element (DUE), permitting loading of DNA polymerase. After initiation quickly degrades to an ADP-DnaA complex that is not apt for DNA replication. Binds acidic phospholipids. In Mycoplasma pneumoniae (strain ATCC 29342 / M129 / Subtype 1) (Mycoplasmoides pneumoniae), this protein is Chromosomal replication initiator protein DnaA.